A 915-amino-acid polypeptide reads, in one-letter code: Coronin-7 (915 aa).

WD repeat units follow at residues 75-115, 124-163, 166-205, and 209-253; these read CHSD…QALP, PEDAQVEVLQFHPTADGVLLSAAGRAVKVWDATKQQPLTE, THGDLVQGAAWSRDGALLGTTCKDKQLRIFDPRAKPEAAQ, and AHEN…AALT. The interval 396–456 is disordered; that stretch reads TSCLAPPAEL…TSPSQRSLQS (61 aa). 2 stretches are compositionally biased toward low complexity: residues 399-413 and 420-450; these read LAPPAELTPATAQPA and SSTPSSLTSPSTPSSLGPSLTSTSGIGTSPS. Phosphoserine is present on residues Ser453 and Ser456. Lys463 is covalently cross-linked (Glycyl lysine isopeptide (Lys-Gly) (interchain with G-Cter in ubiquitin)). WD repeat units follow at residues 533-573, 583-623, 626-665, and 719-759; these read QNGV…LQEV, GHTE…EQLR, GHRDQIFGLAWSPDGQQLATVCKDGRLRIYEPRGSPEPLQ, and DVAP…PFFL. The tract at residues 850-915 is disordered; it reads PPGMTPVSQA…FEGVDEDEWD (66 aa). The segment covering 859 to 869 has biased composition (low complexity); sequence APREAPARRAP. The segment covering 874–886 has biased composition (basic and acidic residues); that stretch reads LEEKSDQQKKEEL. Ser905 is subject to Phosphoserine.

This sequence belongs to the WD repeat coronin family. In terms of assembly, interacts with clathrin adapter AP1 complex. This interaction takes place at Golgi membranes and not AP1-positive endosomal membranes. Interacts (when ubiquitinated at Lys-463) with EPS15. Post-translationally, the membrane-associated form is phosphorylated on tyrosine residues. Ubiquitinated via 'Lys-33'-linked ubiquitin chains by the BCR(KLHL20) E3 ubiquitin ligase complex: 'Lys-33'-linked ubiquitination promotes interaction with EPS15 and facilitates actin polymerization at the trans-Golgi network, thereby facilitating post-Golgi trafficking. Deubiquitinated by ZRANB1/TRABID.

It localises to the golgi apparatus membrane. It is found in the golgi apparatus. Its subcellular location is the trans-Golgi network. The protein resides in the cytoplasmic vesicle. The protein localises to the cytoplasm. It localises to the cytosol. F-actin regulator involved in anterograde Golgi to endosome transport: upon ubiquitination via 'Lys-33'-linked ubiquitin chains by the BCR(KLHL20) E3 ubiquitin ligase complex, interacts with EPS15 and localizes to the trans-Golgi network, where it promotes actin polymerization, thereby facilitating post-Golgi trafficking. May play a role in the maintenance of the Golgi apparatus morphology. This is Coronin-7 (CORO7) from Bos taurus (Bovine).